We begin with the raw amino-acid sequence, 230 residues long: Octanoyltransferase (230 aa).

Residues 31–230 form the BPL/LPL catalytic domain; the sequence is PETPDELWIC…GDKLTRYLAP (200 aa). Substrate is bound by residues 70 to 77, 163 to 165, and 176 to 178; these read RGGQVTYH, ALG, and GVA. C194 acts as the Acyl-thioester intermediate in catalysis.

Belongs to the LipB family.

It localises to the cytoplasm. It catalyses the reaction octanoyl-[ACP] + L-lysyl-[protein] = N(6)-octanoyl-L-lysyl-[protein] + holo-[ACP] + H(+). It functions in the pathway protein modification; protein lipoylation via endogenous pathway; protein N(6)-(lipoyl)lysine from octanoyl-[acyl-carrier-protein]: step 1/2. Functionally, catalyzes the transfer of endogenously produced octanoic acid from octanoyl-acyl-carrier-protein onto the lipoyl domains of lipoate-dependent enzymes. Lipoyl-ACP can also act as a substrate although octanoyl-ACP is likely to be the physiological substrate. This Albidiferax ferrireducens (strain ATCC BAA-621 / DSM 15236 / T118) (Rhodoferax ferrireducens) protein is Octanoyltransferase.